A 485-amino-acid polypeptide reads, in one-letter code: MSVPLLKIGVVLSTMAMITNWMSQTLPSLVGLNTTRLSAASGGTLDRSTGVLPTNPEESWQVYSSAQDSEGRCICTVVAPQQTMCSRDARTKQLRQLLEKVQNMSQSIEVLDRRTQRDLQYVEKMENQMKGLESKFRQVEESHKQHLARQFKAIKAKMDELRPLIPVLEEYKADAKLVLQFKEEVQNLTSVLNELQEEIGAYDYDELQSRVSNLEERLRACMQKLACGKLTGISDPVTVKTSGSRFGSWMTDPLAPEGDNRVWYMDGYHNNRFVREYKSMVDFMNTDNFTSHRLPHPWSGTGQVVYNGSIYFNKFQSHIIIRFDLKTETILKTRSLDYAGYNNMYHYAWGGHSDIDLMVDENGLWAVYATNQNAGNIVISKLDPVSLQILQTWNTSYPKRSAGEAFIICGTLYVTNGYSGGTKVHYAYQTNASTYEYIDIPFQNKYSHISMLDYNPKDRALYAWNNGHQTLYNVTLFHVIRSDEL.

An N-terminal signal peptide occupies residues 1 to 24; sequence MSVPLLKIGVVLSTMAMITNWMSQ. 8 N-linked (GlcNAc...) asparagine glycosylation sites follow: N33, N103, N187, N288, N307, N394, N431, and N473. A coiled-coil region spans residues 87-225; the sequence is RDARTKQLRQ…ERLRACMQKL (139 aa). The Olfactomedin-like domain occupies 226-478; sequence ACGKLTGISD…QTLYNVTLFH (253 aa). A disulfide bridge connects residues C227 and C409.

As to quaternary structure, homotetramer; disulfide-linked. Dimer of dimers, giving rise to a V-shaped homotretramer. Isoform 1 and isoform 3 interact with RTN4R. Identified in a complex with RTN4R and LINGO1. Peripherally associated with AMPAR complex. AMPAR complex consists of an inner core made of 4 pore-forming GluA/GRIA proteins (GRIA1, GRIA2, GRIA3 and GRIA4) and 4 major auxiliary subunits arranged in a twofold symmetry. One of the two pairs of distinct binding sites is occupied either by CNIH2, CNIH3 or CACNG2, CACNG3. The other harbors CACNG2, CACNG3, CACNG4, CACNG8 or GSG1L. This inner core of AMPAR complex is complemented by outer core constituents binding directly to the GluA/GRIA proteins at sites distinct from the interaction sites of the inner core constituents. Outer core constituents include at least PRRT1, PRRT2, CKAMP44/SHISA9, FRRS1L and NRN1. The proteins of the inner and outer core serve as a platform for other, more peripherally associated AMPAR constituents, including OLFM1. Alone or in combination, these auxiliary subunits control the gating and pharmacology of the AMPAR complex and profoundly impact their biogenesis and protein processing. Interacts with OLFM2. In terms of processing, in isoform 3 and isoform 4, the signal peptide is predicted to end in position 17. As to expression, expressed in the brain (at protein level). Expressed in the brain, predominantly in the cortex and hippocampus. In the pituitary only the two A-type and in the adrenal glands only the two B-type forms were detected.

It localises to the secreted. It is found in the synapse. Its subcellular location is the endoplasmic reticulum. The protein resides in the cell projection. The protein localises to the axon. It localises to the perikaryon. Contributes to the regulation of axonal growth in the embryonic and adult central nervous system by inhibiting interactions between RTN4R and LINGO1. Inhibits RTN4R-mediated axon growth cone collapse. May play an important role in regulating the production of neural crest cells by the neural tube. May be required for normal responses to olfactory stimuli. The polypeptide is Noelin (Olfm1) (Rattus norvegicus (Rat)).